A 51-amino-acid polypeptide reads, in one-letter code: Large ribosomal subunit protein eL40 (51 aa).

It belongs to the eukaryotic ribosomal protein eL40 family.

The polypeptide is Large ribosomal subunit protein eL40 (Thermofilum pendens (strain DSM 2475 / Hrk 5)).